The sequence spans 917 residues: DNA repair endonuclease XPF (917 aa).

A helicase-like region spans residues 1–457 (MEPGLSGERR…EVWVNVRKGD (457 aa)). Leucine-zipper stretches follow at residues 233 to 254 (LNACLKELKCHNPSLEVEDLSL) and 270 to 298 (LDPLWHQLGAKTKSLVQDLKILRTLLQYL). Lys-289 carries the N6-acetyllysine modification. A compositionally biased stretch (basic and acidic residues) spans 454–479 (RKGDGPKRTTKSDKRPKAAPNKERAS). Disordered regions lie at residues 454-524 (RKGD…SSPE) and 643-681 (VPEEREGRDETNLDLARGSAALDAPTDTRKAGGQEQNGT). A Nuclear localization signal motif is present at residues 487 to 492 (KRKKQE). Residues 507–516 (EDKALEEDLC) show a composition bias toward basic and acidic residues. Residue Ser-522 is modified to Phosphoserine. The segment covering 643 to 653 (VPEEREGRDET) has biased composition (basic and acidic residues). The interval 659-814 (RGSAALDAPT…PSPHATAELF (156 aa)) is nuclease. In terms of domain architecture, ERCC4 spans 684 to 764 (SIVVDMREFR…RPVLLIEFDP (81 aa)). Ser-765 bears the Phosphoserine mark. Positions 838-906 (TLPESDRYNP…QLHDFLHTAY (69 aa)) are hhH2, dimerization with ERCC1. Lys-912 carries the post-translational modification N6-acetyllysine.

Belongs to the XPF family. Heterodimer composed of ERCC1 and ERCC4/XPF. Interacts with SLX4/BTBD12; this interaction is direct and links the ERCC1-ERCC4/XPF complex to SLX4, which may coordinate the action of the structure-specific endonuclease during DNA repair. The cofactor is Mg(2+). Acetylation at Lys-912 by KAT5 promotes interaction with ERCC1 by disrupting a salt bridge between Asp-908 and Lys-912, thereby exposing a second binding site for ERCC1. Deacetylated by SIRT1.

It is found in the nucleus. It localises to the chromosome. Functionally, catalytic component of a structure-specific DNA repair endonuclease responsible for the 5-prime incision during DNA repair, and which is essential for nucleotide excision repair (NER) and interstrand cross-link (ICL) repair. The sequence is that of DNA repair endonuclease XPF from Mus musculus (Mouse).